The primary structure comprises 280 residues: Chorismate mutase (280 aa).

Residues 3-256 form the Chorismate mutase domain; sequence FMKPETVLDL…EVDYLLRRLE (254 aa). Positions 73, 74, 137, 139, and 140 each coordinate L-tyrosine. 3 residues coordinate L-tryptophan: N137, G139, and S140.

Homodimer.

The protein resides in the cytoplasm. The enzyme catalyses chorismate = prephenate. It functions in the pathway metabolic intermediate biosynthesis; prephenate biosynthesis; prephenate from chorismate: step 1/1. With respect to regulation, each dimer has two allosteric binding sites that can bind the regulatory effectors tryptophan or tyrosine. Can bind either one tryptophan or one tyrosine, two tryptophan or two tyrosine or one tryptophan and one tyrosine, which differentially affect the catalytic activity. Activated by tryptophan and subject to feedback inhibition by tyrosine. In the presence of both tryptophan and tyrosine, the enzyme is in the activated state. Its function is as follows. Catalyzes the Claisen rearrangement of chorismate to prephenate. Acts at the first branch point in the aromatic amino acid pathway where it steers biosynthesis towards phenylalanine and tyrosine, and away from tryptophan. This is Chorismate mutase from Pichia angusta (Yeast).